The following is a 102-amino-acid chain: uncharacterized protein (102 aa).

The chain crosses the membrane as a helical span at residues 77–96; the sequence is FFSACVAKSYSSFFISICIL.

It is found in the membrane. This is an uncharacterized protein from Saccharomyces cerevisiae (strain ATCC 204508 / S288c) (Baker's yeast).